The primary structure comprises 429 residues: Glutamate-1-semialdehyde 2,1-aminomutase (429 aa).

Lys270 carries the N6-(pyridoxal phosphate)lysine modification.

It belongs to the class-III pyridoxal-phosphate-dependent aminotransferase family. HemL subfamily. In terms of assembly, homodimer. Requires pyridoxal 5'-phosphate as cofactor.

Its subcellular location is the cytoplasm. The catalysed reaction is (S)-4-amino-5-oxopentanoate = 5-aminolevulinate. It participates in porphyrin-containing compound metabolism; protoporphyrin-IX biosynthesis; 5-aminolevulinate from L-glutamyl-tRNA(Glu): step 2/2. This chain is Glutamate-1-semialdehyde 2,1-aminomutase, found in Cupriavidus pinatubonensis (strain JMP 134 / LMG 1197) (Cupriavidus necator (strain JMP 134)).